Here is a 333-residue protein sequence, read N- to C-terminus: Holliday junction branch migration complex subunit RuvB (333 aa).

Positions 1–182 are large ATPase domain (RuvB-L); that stretch reads MDERLLSGES…FGVLSRLEYY (182 aa). Residues Leu21, Arg22, Gly63, Lys66, Thr67, Thr68, 129 to 131, Arg172, Tyr182, and Arg219 contribute to the ATP site; that span reads EDF. Mg(2+) is bound at residue Thr67. The small ATPAse domain (RuvB-S) stretch occupies residues 183 to 253; that stretch reads TVDQLSAIVE…ITQMALELLQ (71 aa). Residues 256–333 form a head domain (RuvB-H) region; the sequence is KLGLDHIDHK…EHFGMEMPKV (78 aa). Arg311 and Arg316 together coordinate DNA.

This sequence belongs to the RuvB family. As to quaternary structure, homohexamer. Forms an RuvA(8)-RuvB(12)-Holliday junction (HJ) complex. HJ DNA is sandwiched between 2 RuvA tetramers; dsDNA enters through RuvA and exits via RuvB. An RuvB hexamer assembles on each DNA strand where it exits the tetramer. Each RuvB hexamer is contacted by two RuvA subunits (via domain III) on 2 adjacent RuvB subunits; this complex drives branch migration. In the full resolvosome a probable DNA-RuvA(4)-RuvB(12)-RuvC(2) complex forms which resolves the HJ.

The protein localises to the cytoplasm. The enzyme catalyses ATP + H2O = ADP + phosphate + H(+). The RuvA-RuvB-RuvC complex processes Holliday junction (HJ) DNA during genetic recombination and DNA repair, while the RuvA-RuvB complex plays an important role in the rescue of blocked DNA replication forks via replication fork reversal (RFR). RuvA specifically binds to HJ cruciform DNA, conferring on it an open structure. The RuvB hexamer acts as an ATP-dependent pump, pulling dsDNA into and through the RuvAB complex. RuvB forms 2 homohexamers on either side of HJ DNA bound by 1 or 2 RuvA tetramers; 4 subunits per hexamer contact DNA at a time. Coordinated motions by a converter formed by DNA-disengaged RuvB subunits stimulates ATP hydrolysis and nucleotide exchange. Immobilization of the converter enables RuvB to convert the ATP-contained energy into a lever motion, pulling 2 nucleotides of DNA out of the RuvA tetramer per ATP hydrolyzed, thus driving DNA branch migration. The RuvB motors rotate together with the DNA substrate, which together with the progressing nucleotide cycle form the mechanistic basis for DNA recombination by continuous HJ branch migration. Branch migration allows RuvC to scan DNA until it finds its consensus sequence, where it cleaves and resolves cruciform DNA. The chain is Holliday junction branch migration complex subunit RuvB from Bacillus cereus (strain 03BB102).